The sequence spans 385 residues: MFEPVELNNNAIIKVIGIGGGGGNAVEYMVQEHIEGVEFFAINTDAQALRKIEVEQTIQIGSDITKGLGAGANPEIGRRAAEEDSDNLKSILKDADMVFIASGMGGGTGTGAAPIIAKISKKLGILTVAVVTKPFNFEGKKRMISAEQGVSELSKYVDSLIIIPNDKLIKVLSKGISLLDAFNTANNVLKGAVQGIAELITKPGLMNVDFADVRTVMSEMGYAMMGTGIASGDERAKEASKIAISSPLLEDINLSGAKGVLVNITSGLNMKLDEFETIGNTIRSFSSDNATVVIGTSLDTNMNDSLRVTIVATGIGTYNDIKHNNNTENHTSKHVPKNLENLQTKESPKYNNPKQHIYDTFNQQGITNKEMNYLDIPAFLRKKHK.

GTP contacts are provided by residues 20–24 (GGGGN), 107–109 (GTG), E138, R142, and N186.

This sequence belongs to the FtsZ family. As to quaternary structure, homodimer. Polymerizes to form a dynamic ring structure in a strictly GTP-dependent manner. Interacts directly with several other division proteins.

It is found in the cytoplasm. Its function is as follows. Essential cell division protein that forms a contractile ring structure (Z ring) at the future cell division site. The regulation of the ring assembly controls the timing and the location of cell division. One of the functions of the FtsZ ring is to recruit other cell division proteins to the septum to produce a new cell wall between the dividing cells. Binds GTP and shows GTPase activity. In Buchnera aphidicola subsp. Baizongia pistaciae (strain Bp), this protein is Cell division protein FtsZ.